The chain runs to 248 residues: Ribosomal RNA small subunit methyltransferase J (248 aa).

S-adenosyl-L-methionine-binding positions include 101-102 (RD), 117-118 (ER), 153-154 (SS), and Asp-171.

This sequence belongs to the methyltransferase superfamily. RsmJ family.

Its subcellular location is the cytoplasm. It carries out the reaction guanosine(1516) in 16S rRNA + S-adenosyl-L-methionine = N(2)-methylguanosine(1516) in 16S rRNA + S-adenosyl-L-homocysteine + H(+). Functionally, specifically methylates the guanosine in position 1516 of 16S rRNA. The protein is Ribosomal RNA small subunit methyltransferase J of Pectobacterium atrosepticum (strain SCRI 1043 / ATCC BAA-672) (Erwinia carotovora subsp. atroseptica).